A 388-amino-acid polypeptide reads, in one-letter code: Succinate--CoA ligase [ADP-forming] subunit beta (388 aa).

Residues 9–244 form the ATP-grasp domain; the sequence is KALFAEYGLP…PSQDDAREAH (236 aa). ATP is bound by residues Lys-46, 53–55, Glu-99, Thr-102, and Glu-107; that span reads GRG. Mg(2+) contacts are provided by Asn-199 and Asp-213. Substrate-binding positions include Asn-264 and 321–323; that span reads GIV.

It belongs to the succinate/malate CoA ligase beta subunit family. Heterotetramer of two alpha and two beta subunits. Requires Mg(2+) as cofactor.

The catalysed reaction is succinate + ATP + CoA = succinyl-CoA + ADP + phosphate. The enzyme catalyses GTP + succinate + CoA = succinyl-CoA + GDP + phosphate. The protein operates within carbohydrate metabolism; tricarboxylic acid cycle; succinate from succinyl-CoA (ligase route): step 1/1. Functionally, succinyl-CoA synthetase functions in the citric acid cycle (TCA), coupling the hydrolysis of succinyl-CoA to the synthesis of either ATP or GTP and thus represents the only step of substrate-level phosphorylation in the TCA. The beta subunit provides nucleotide specificity of the enzyme and binds the substrate succinate, while the binding sites for coenzyme A and phosphate are found in the alpha subunit. This chain is Succinate--CoA ligase [ADP-forming] subunit beta, found in Shewanella halifaxensis (strain HAW-EB4).